The following is a 298-amino-acid chain: ATP phosphoribosyltransferase (298 aa).

Belongs to the ATP phosphoribosyltransferase family. Long subfamily. The cofactor is Mg(2+).

The protein localises to the cytoplasm. It catalyses the reaction 1-(5-phospho-beta-D-ribosyl)-ATP + diphosphate = 5-phospho-alpha-D-ribose 1-diphosphate + ATP. The protein operates within amino-acid biosynthesis; L-histidine biosynthesis; L-histidine from 5-phospho-alpha-D-ribose 1-diphosphate: step 1/9. Feedback inhibited by histidine. In terms of biological role, catalyzes the condensation of ATP and 5-phosphoribose 1-diphosphate to form N'-(5'-phosphoribosyl)-ATP (PR-ATP). Has a crucial role in the pathway because the rate of histidine biosynthesis seems to be controlled primarily by regulation of HisG enzymatic activity. The protein is ATP phosphoribosyltransferase of Aliivibrio fischeri (strain ATCC 700601 / ES114) (Vibrio fischeri).